The sequence spans 384 residues: FAD-dependent urate hydroxylase (384 aa).

FAD-binding positions include Gly11, 30–31, Ser43, and Val125; that span reads EA. Substrate-binding positions include Asn178, Arg204, and 216 to 218; that span reads YFF. Residues Asp285 and 295–299 contribute to the FAD site; that span reads GQGGC.

It belongs to the FAD-dependent urate hydroxylase family. In terms of assembly, monomer. FAD serves as cofactor.

The catalysed reaction is urate + NADH + O2 + H(+) = 5-hydroxyisourate + NAD(+) + H2O. Its pathway is purine metabolism; urate degradation. In terms of biological role, catalyzes the hydroxylation of urate to 5-hydroxyisourate (HIU). The sequence is that of FAD-dependent urate hydroxylase from Klebsiella pneumoniae subsp. pneumoniae (strain ATCC 700721 / MGH 78578).